Reading from the N-terminus, the 281-residue chain is MSAIKLDGNLYRDEIFEDLKGRVNSLREKGIVPGLATVLVGDDPASHAYVRMKHKDCEIVGVKSIRKDLPADVTQEELLAVIDDLNADPECTGYIVQLPLPKHLDENAVLERIDPAKDADGLHPVNLGKLVLNEPAPLPCTPNGAIHLLRRFGVELDGKKVVVIGRGVTVGRPIGLMLTRRSENSTVTLCHTGTRDLAAETREADVIVAAAGKAHMLTADMVKQGAAILDVGVSRVDGKLLGDVHPDVWDVAGAVSPNPGGVGPLTRAFLIRNVVERAERA.

Residues 165–167 (GRG), Thr-192, and Val-233 contribute to the NADP(+) site.

The protein belongs to the tetrahydrofolate dehydrogenase/cyclohydrolase family. In terms of assembly, homodimer.

The enzyme catalyses (6R)-5,10-methylene-5,6,7,8-tetrahydrofolate + NADP(+) = (6R)-5,10-methenyltetrahydrofolate + NADPH. It carries out the reaction (6R)-5,10-methenyltetrahydrofolate + H2O = (6R)-10-formyltetrahydrofolate + H(+). It functions in the pathway one-carbon metabolism; tetrahydrofolate interconversion. Functionally, catalyzes the oxidation of 5,10-methylenetetrahydrofolate to 5,10-methenyltetrahydrofolate and then the hydrolysis of 5,10-methenyltetrahydrofolate to 10-formyltetrahydrofolate. The polypeptide is Bifunctional protein FolD (Corynebacterium diphtheriae (strain ATCC 700971 / NCTC 13129 / Biotype gravis)).